The sequence spans 236 residues: Small ribosomal subunit protein uS2c (236 aa).

The protein belongs to the universal ribosomal protein uS2 family.

It localises to the plastid. It is found in the chloroplast. This is Small ribosomal subunit protein uS2c (rps2) from Physcomitrium patens (Spreading-leaved earth moss).